The sequence spans 630 residues: MPTTFKEIPRERPVTPLLDRADTPHGLRRLGEAELETLADELRLELLYSVGQTGGHFGAGLGVIELTIALHYVFDTPDDRLVWDVGHQAYPHKILTGRRARMSTLRQKDGVAAFPRRSESEYDTFGVGHSSTSISAALGMAIASRLQGSERKSIAVIGDGALTAGMAFEALNHAPEVAANMLVILNDNDMSISRNVGGLSNYLAKILSSRTYSSMREGSKKVLSRLPGAWEIARRTEEYAKGMLVPGTLFEELGWNYIGPIDGHDLPTLIATLRNMRDLKGPQFLHVVTKKGKGFAPAEVDPIGYHAITKLEPLNAPAAPKKISAPKYSAVFGQWICDMAEADSRLVGITPAMKEGSDLVAFSERFPERYFDVAIAEQHAVTLAAGMACEGSKPVVAIYSTFLQRGYDQLVHDVAVQNLDVLFAIDRAGLVGEDGPTHAGSFDLSYLRCIPGMVVMTPSDENELRKLLNTGYLHTGPAAVRYPRGTGPDALIETGLDPVEIGKGVVRRQGQGVAILVFGVQLADALVVAEKLDATVIDMRFVKPLDEALVSEAAANHELLVTLEENAVMGGAGAAVSEFLARANILKSVLHLGLPDTYVEHAKPAQMLAECGLDAQGIEAAINERLALIG.

Residues His-87 and 128-130 each bind thiamine diphosphate; that span reads GHS. Asp-159 contributes to the Mg(2+) binding site. Residues 160–161, Asn-188, Phe-295, and Glu-377 each bind thiamine diphosphate; that span reads GA. Asn-188 serves as a coordination point for Mg(2+).

The protein belongs to the transketolase family. DXPS subfamily. As to quaternary structure, homodimer. The cofactor is Mg(2+). Thiamine diphosphate is required as a cofactor.

The catalysed reaction is D-glyceraldehyde 3-phosphate + pyruvate + H(+) = 1-deoxy-D-xylulose 5-phosphate + CO2. Its pathway is metabolic intermediate biosynthesis; 1-deoxy-D-xylulose 5-phosphate biosynthesis; 1-deoxy-D-xylulose 5-phosphate from D-glyceraldehyde 3-phosphate and pyruvate: step 1/1. Catalyzes the acyloin condensation reaction between C atoms 2 and 3 of pyruvate and glyceraldehyde 3-phosphate to yield 1-deoxy-D-xylulose-5-phosphate (DXP). This Pseudomonas savastanoi pv. phaseolicola (strain 1448A / Race 6) (Pseudomonas syringae pv. phaseolicola (strain 1448A / Race 6)) protein is 1-deoxy-D-xylulose-5-phosphate synthase.